The sequence spans 393 residues: HORMA domain-containing protein 1 (393 aa).

The HORMA domain occupies glutamine 24 to valine 226. The interval serine 322–isoleucine 393 is disordered. Basic and acidic residues predominate over residues lysine 352–glutamine 361. The residue at position 375 (serine 375) is a Phosphoserine. Residues lysine 382 to lysine 385 carry the Nuclear localization signal motif.

Interacts with HORMAD2. Interacts with IHO1. Phosphorylated at Ser-376 in a SPO11-dependent manner.

The protein resides in the nucleus. Its subcellular location is the chromosome. Its function is as follows. Plays a key role in meiotic progression. Regulates 3 different functions during meiosis: ensures that sufficient numbers of processed DNA double-strand breaks (DSBs) are available for successful homology search by increasing the steady-state numbers of single-stranded DSB ends. Promotes synaptonemal-complex formation independently of its role in homology search. Plays a key role in the male mid-pachytene checkpoint and the female meiotic prophase checkpoint: required for efficient build-up of ATR activity on unsynapsed chromosome regions, a process believed to form the basis of meiotic silencing of unsynapsed chromatin (MSUC) and meiotic prophase quality control in both sexes. This chain is HORMA domain-containing protein 1 (HORMAD1), found in Bos taurus (Bovine).